The sequence spans 494 residues: UDP-N-acetylmuramate--L-alanine ligase (494 aa).

122–128 (GTHGKTT) lines the ATP pocket.

This sequence belongs to the MurCDEF family.

The protein resides in the cytoplasm. The enzyme catalyses UDP-N-acetyl-alpha-D-muramate + L-alanine + ATP = UDP-N-acetyl-alpha-D-muramoyl-L-alanine + ADP + phosphate + H(+). It functions in the pathway cell wall biogenesis; peptidoglycan biosynthesis. In terms of biological role, cell wall formation. The chain is UDP-N-acetylmuramate--L-alanine ligase from Mycobacterium bovis (strain ATCC BAA-935 / AF2122/97).